Here is a 206-residue protein sequence, read N- to C-terminus: Ribosomal RNA large subunit methyltransferase E (206 aa).

5 residues coordinate S-adenosyl-L-methionine: glycine 61, tryptophan 63, aspartate 81, aspartate 97, and aspartate 122. Lysine 162 acts as the Proton acceptor in catalysis.

It belongs to the class I-like SAM-binding methyltransferase superfamily. RNA methyltransferase RlmE family.

It localises to the cytoplasm. The catalysed reaction is uridine(2552) in 23S rRNA + S-adenosyl-L-methionine = 2'-O-methyluridine(2552) in 23S rRNA + S-adenosyl-L-homocysteine + H(+). In terms of biological role, specifically methylates the uridine in position 2552 of 23S rRNA at the 2'-O position of the ribose in the fully assembled 50S ribosomal subunit. The chain is Ribosomal RNA large subunit methyltransferase E from Neisseria meningitidis serogroup C (strain 053442).